We begin with the raw amino-acid sequence, 274 residues long: Light-independent protochlorophyllide reductase iron-sulfur ATP-binding protein (274 aa).

Residues 12 to 17 (GIGKST) and K41 each bind ATP. S16 serves as a coordination point for Mg(2+). 2 residues coordinate [4Fe-4S] cluster: C97 and C131.

It belongs to the NifH/BchL/ChlL family. As to quaternary structure, homodimer. Protochlorophyllide reductase is composed of three subunits; BchL, BchN and BchB. [4Fe-4S] cluster is required as a cofactor.

It catalyses the reaction chlorophyllide a + oxidized 2[4Fe-4S]-[ferredoxin] + 2 ADP + 2 phosphate = protochlorophyllide a + reduced 2[4Fe-4S]-[ferredoxin] + 2 ATP + 2 H2O. It participates in porphyrin-containing compound metabolism; bacteriochlorophyll biosynthesis (light-independent). In terms of biological role, component of the dark-operative protochlorophyllide reductase (DPOR) that uses Mg-ATP and reduced ferredoxin to reduce ring D of protochlorophyllide (Pchlide) to form chlorophyllide a (Chlide). This reaction is light-independent. The L component serves as a unique electron donor to the NB-component of the complex, and binds Mg-ATP. This Chloroherpeton thalassium (strain ATCC 35110 / GB-78) protein is Light-independent protochlorophyllide reductase iron-sulfur ATP-binding protein.